The following is a 429-amino-acid chain: MSFYRSWIGGEGELVRRYTSSIRDDAEIVEEVVKIMEAHVRHLAEVGAAPKEAAEAVAKALREVEPERLLTSEFEDVHEALEKWLVDRLGEEVAGWIGLGRSRNDHVAAAIRLAALRKTGVLKKAVERMRCVLAKRALEYADCAMPSFTHFQPAQAITFGHYLLAVDELAGEFLHVLKPVEELLKRSPLGAGPAGGARAPIDRERVAKLAGFEGVVENALYASGSRFFALALASAVVSFLVELSRAVDDFIRWNSPLVGYVAAPDSHVSTSSIMPHKRNLVTLEVFRARAAEALGHLAALHAVVMKIGMGYSLDLQEATRHLWAVLNIASEGVEVFTDFLEKMSFDCGRARRDAERYYSTSSDTAEEAALRGVPFRRAYFQLAREIREGAARLLPVDEALRRPTRGSANPEEVKRAASARLVFCREKPL.

The protein belongs to the lyase 1 family. Argininosuccinate lyase subfamily.

It is found in the cytoplasm. It carries out the reaction 2-(N(omega)-L-arginino)succinate = fumarate + L-arginine. Its pathway is amino-acid biosynthesis; L-arginine biosynthesis; L-arginine from L-ornithine and carbamoyl phosphate: step 3/3. The chain is Argininosuccinate lyase from Pyrobaculum neutrophilum (strain DSM 2338 / JCM 9278 / NBRC 100436 / V24Sta) (Thermoproteus neutrophilus).